The chain runs to 443 residues: MIVSRAFAGKRYAVLGLARSGLASVESLLAGGADVTVWDNREEPRSAFEGSCTIADPLSIDLTGFAGVVVSPGVPLNRHPIADHARAAGVPVIGDIELFAQARADLPPHRVVGITGTNGKSTTTMLVHHICAAAGLPARLGGNIGLPILGQEPLPEGGVYVLELSSYQIDLTQSLACDVAALINLSPDHLDRYDGFAGYAASKARLFAMQRADQHAVFGCGDEHTLEIAREASATHDTGFVHVVQPSALHGQLEWPSLQGPHNLQNAAIAVEIARQLGIAEDIWRSALASFVGLPHRMERVAEANGVLFVNDSKATNPASTAPALGAYPRIHWILGGLPKSDNLDECAPYFDHVVAAYTIGEAGPRFAEILEPVMPVTRSEMLCDAVRQAMEAAQPGDVVMLSPACASFDQFRDFEARGDSFRQIVEALIEDREAPCPDGTPT.

116–122 is a binding site for ATP; it reads GTNGKST.

The protein belongs to the MurCDEF family.

It localises to the cytoplasm. The enzyme catalyses UDP-N-acetyl-alpha-D-muramoyl-L-alanine + D-glutamate + ATP = UDP-N-acetyl-alpha-D-muramoyl-L-alanyl-D-glutamate + ADP + phosphate + H(+). It functions in the pathway cell wall biogenesis; peptidoglycan biosynthesis. Cell wall formation. Catalyzes the addition of glutamate to the nucleotide precursor UDP-N-acetylmuramoyl-L-alanine (UMA). This is UDP-N-acetylmuramoylalanine--D-glutamate ligase from Novosphingobium aromaticivorans (strain ATCC 700278 / DSM 12444 / CCUG 56034 / CIP 105152 / NBRC 16084 / F199).